The sequence spans 113 residues: MSELDSQVPTAFDPFADANAEDSGAGTKEYVHIRVQQRNGRKSLTTVQGLKKEYSYTKILKDLKKEFCCNGTVVQDSELGQVIQLQGDQRKNVSTFLVQAGLVKKDNIKIHGF.

Positions 1 to 24 (MSELDSQVPTAFDPFADANAEDSG) are disordered. Residue serine 2 is modified to N-acetylserine.

The protein belongs to the SUI1 family.

Probably involved in translation. The protein is Protein translation factor SUI1 homolog 1 of Arabidopsis thaliana (Mouse-ear cress).